Here is a 1037-residue protein sequence, read N- to C-terminus: PH and SEC7 domain-containing protein 3 (1037 aa).

The disordered stretch occupies residues 37 to 70 (EEKTPDSSDHGGSTLLPPTVTNEFPEYGTMEEGG). Phosphoserine is present on Ser76. 5 disordered regions span residues 169-189 (TASH…GKSP), 236-255 (RVPE…HNPV), 262-284 (REQR…SMGR), 304-335 (EAES…ACGV), and 353-375 (APSE…ESGE). A compositionally biased stretch (low complexity) spans 237–251 (VPESACPVSSSSAGS). Residues 262–277 (REQRSDLGREHPRGYD) are compositionally biased toward basic and acidic residues. An SEC7 domain is found at 515 to 723 (NSVYTRGPQE…KALYNSIKNE (209 aa)). Residues 730 to 747 (DDEEKKKSPSEGTDEKAN) are compositionally biased toward basic and acidic residues. A disordered region spans residues 730–762 (DDEEKKKSPSEGTDEKANGTHPKTISRIGSTTN). Polar residues predominate over residues 750-762 (HPKTISRIGSTTN). Ser759 is modified (phosphoserine). A PH domain is found at 774 to 887 (AVYKSGFLAR…WINKINCVAA (114 aa)). Positions 911–941 (ATTTKLSQEEQLKSHESKLKQITTELAEHRS) form a coiled coil. Residues 984–1037 (LLTTDGNEPVGLKKSHSSPSLNPDASPVTAKVKRNVSERKDHRPETPGIKQKVT) are disordered. 5 positions are modified to phosphoserine: Ser998, Ser1000, Ser1001, Ser1003, and Ser1009. A compositionally biased stretch (basic and acidic residues) spans 1018–1028 (NVSERKDHRPE).

As to expression, ubiquitously expressed, with highest levels in liver. Present in brain, with highest levels in olfactory bulb, cortex, hippocampal pyramidal cell layer and cerebellar granule cell layer (at protein level).

It localises to the cell membrane. It is found in the cell projection. Its subcellular location is the ruffle membrane. The protein resides in the postsynaptic density. In terms of biological role, guanine nucleotide exchange factor for ARF6. The sequence is that of PH and SEC7 domain-containing protein 3 (Psd3) from Mus musculus (Mouse).